The chain runs to 191 residues: MKKLYLASKNQGKIEEYKKLLLNVNCQLLLQPESIEVEENGITFRENAIKKASEVSKKTRNYAIADDSGICIDALDGRPGIYSSRYAENDQKRIERVLHELDGEKNRGAFFIANVCVCSPSRDVILESEAKCFGNIILSPRGKGGFGYDPIFEERSTRLTFAEMNNVIKDSCSHRGRALKKIIPGLLEIFS.

8 to 13 (SKNQGK) contacts substrate. Glu38 and Asp67 together coordinate Mg(2+). Asp67 functions as the Proton acceptor in the catalytic mechanism. Residues Ser68, 146-149 (FGYD), Lys169, and 174-175 (HR) contribute to the substrate site.

It belongs to the HAM1 NTPase family. As to quaternary structure, homodimer. Mg(2+) serves as cofactor.

The catalysed reaction is XTP + H2O = XMP + diphosphate + H(+). It carries out the reaction dITP + H2O = dIMP + diphosphate + H(+). The enzyme catalyses ITP + H2O = IMP + diphosphate + H(+). Its function is as follows. Pyrophosphatase that catalyzes the hydrolysis of nucleoside triphosphates to their monophosphate derivatives, with a high preference for the non-canonical purine nucleotides XTP (xanthosine triphosphate), dITP (deoxyinosine triphosphate) and ITP. Seems to function as a house-cleaning enzyme that removes non-canonical purine nucleotides from the nucleotide pool, thus preventing their incorporation into DNA/RNA and avoiding chromosomal lesions. The sequence is that of dITP/XTP pyrophosphatase from Prochlorococcus marinus subsp. pastoris (strain CCMP1986 / NIES-2087 / MED4).